The primary structure comprises 274 residues: Cytochrome b-c1 complex subunit Rieske, mitochondrial (274 aa).

The Mitochondrial matrix segment spans residues 79–103 (SHTDIKVPDFSDYRRSEVLDTTKSS). The chain crosses the membrane as a helical span at residues 104 to 140 (RESSDARKGFSYLVTATTAVGVTYAAKSIVTQFVSSM). The Mitochondrial intermembrane segment spans residues 141-274 (SASADVLAMS…FTSDDLVIVG (134 aa)). The Rieske domain maps to 187–272 (EAAVELSQLR…YEFTSDDLVI (86 aa)). Residues Cys217, His219, Cys236, His239, and Ser241 each coordinate [2Fe-2S] cluster. Cysteines 222 and 238 form a disulfide.

This sequence belongs to the Rieske iron-sulfur protein family. In terms of assembly, component of the ubiquinol-cytochrome c oxidoreductase (cytochrome b-c1 complex, complex III, CIII), a multisubunit enzyme composed of 11 subunits. The complex is composed of 3 respiratory subunits cytochrome b, cytochrome c1 and Rieske protein UQCRFS1, 2 core protein subunits UQCRC1/QCR1 and UQCRC2/QCR2, and 6 low-molecular weight protein subunits UQCRH/QCR6, UQCRB/QCR7, UQCRQ/QCR8, UQCR10/QCR9, UQCR11/QCR10 and subunit 9, the cleavage product of Rieske protein UQCRFS1. The complex exists as an obligatory dimer and forms supercomplexes (SCs) in the inner mitochondrial membrane with NADH-ubiquinone oxidoreductase (complex I, CI) and cytochrome c oxidase (complex IV, CIV), resulting in different assemblies (supercomplex SCI(1)III(2)IV(1) and megacomplex MCI(2)III(2)IV(2)). Incorporation of the Rieske protein UQCRFS1 is the penultimate step in complex III assembly. Interacts with TTC19, which is involved in the clearance of UQCRFS1 fragments. Component of the ubiquinol-cytochrome c oxidoreductase (cytochrome b-c1 complex, complex III, CIII). Subunit 9 corresponds to the mitochondrial targeting sequence (MTS) of Rieske protein UQCRFS1. It is retained after processing and incorporated inside complex III, where it remains bound to the complex and localizes between the 2 core subunits UQCRC1/QCR1 and UQCRC2/QCR2. Requires [2Fe-2S] cluster as cofactor. In terms of processing, proteolytic processing is necessary for the correct insertion of UQCRFS1 in the complex III dimer. Several fragments are generated during UQCRFS1 insertion, most probably due to the endogenous matrix-processing peptidase (MPP) activity of the 2 core protein subunits UQCRC1/QCR1 and UQCRC2/QCR2, which are homologous to the 2 mitochondrial-processing peptidase (MPP) subunits beta-MPP and alpha-MPP respectively. The action of the protease is also necessary for the clearance of the UQCRFS1 fragments.

The protein resides in the mitochondrion inner membrane. The catalysed reaction is a quinol + 2 Fe(III)-[cytochrome c](out) = a quinone + 2 Fe(II)-[cytochrome c](out) + 2 H(+)(out). Its function is as follows. Component of the ubiquinol-cytochrome c oxidoreductase, a multisubunit transmembrane complex that is part of the mitochondrial electron transport chain which drives oxidative phosphorylation. The respiratory chain contains 3 multisubunit complexes succinate dehydrogenase (complex II, CII), ubiquinol-cytochrome c oxidoreductase (cytochrome b-c1 complex, complex III, CIII) and cytochrome c oxidase (complex IV, CIV), that cooperate to transfer electrons derived from NADH and succinate to molecular oxygen, creating an electrochemical gradient over the inner membrane that drives transmembrane transport and the ATP synthase. The cytochrome b-c1 complex catalyzes electron transfer from ubiquinol to cytochrome c, linking this redox reaction to translocation of protons across the mitochondrial inner membrane, with protons being carried across the membrane as hydrogens on the quinol. In the process called Q cycle, 2 protons are consumed from the matrix, 4 protons are released into the intermembrane space and 2 electrons are passed to cytochrome c. The Rieske protein is a catalytic core subunit containing a [2Fe-2S] iron-sulfur cluster. It cycles between 2 conformational states during catalysis to transfer electrons from the quinol bound in the Q(0) site in cytochrome b to cytochrome c1. Incorporation of UQCRFS1 is the penultimate step in complex III assembly. Component of the ubiquinol-cytochrome c oxidoreductase (cytochrome b-c1 complex, complex III, CIII). UQCRFS1 undergoes proteolytic processing once it is incorporated in the complex III dimer. One of the fragments, called subunit 9, corresponds to its mitochondrial targeting sequence (MTS). The proteolytic processing is necessary for the correct insertion of UQCRFS1 in the complex III dimer, but the persistence of UQCRFS1-derived fragments may prevent newly imported UQCRFS1 to be processed and assembled into complex III and is detrimental for the complex III structure and function. This is Cytochrome b-c1 complex subunit Rieske, mitochondrial (UQCRFS1) from Aotus azarae (Azara's night monkey).